The following is a 167-amino-acid chain: Signal peptidase complex catalytic subunit SEC11 (167 aa).

The Cytoplasmic portion of the chain corresponds to 1–12 (MNLRLELTRFLK). Residues 13–30 (LCFVLSSAFMFWKGLSIA) traverse the membrane as a helical; Signal-anchor for type II membrane protein segment. The Lumenal segment spans residues 31–167 (TNSHSPIVVV…LGISALLSNE (137 aa)). Residues serine 44, histidine 83, and aspartate 109 each act as charge relay system in the active site. The C-terminal short (CTS) helix stretch occupies residues 153-164 (ALMGFLGISALL).

It belongs to the peptidase S26B family. Component of the signal peptidase complex (SPC) composed of a catalytic subunit SEC11 and three accessory subunits SPC1, SPC2 and SPC3. The complex induces a local thinning of the ER membrane which is used to measure the length of the signal peptide (SP) h-region of protein substrates. This ensures the selectivity of the complex towards h-regions shorter than 18-20 amino acids. SPC associates with the translocon complex.

It is found in the endoplasmic reticulum membrane. It catalyses the reaction Cleavage of hydrophobic, N-terminal signal or leader sequences from secreted and periplasmic proteins.. Its function is as follows. Catalytic component of the signal peptidase complex (SPC) which catalyzes the cleavage of N-terminal signal sequences from nascent proteins as they are translocated into the lumen of the endoplasmic reticulum. Specifically cleaves N-terminal signal peptides that contain a hydrophobic alpha-helix (h-region) shorter than 18-20 amino acids. The sequence is that of Signal peptidase complex catalytic subunit SEC11 (SEC11) from Zygosaccharomyces rouxii (strain ATCC 2623 / CBS 732 / NBRC 1130 / NCYC 568 / NRRL Y-229).